The chain runs to 1010 residues: Lysosomal alpha-mannosidase (1010 aa).

Positions 1-22 (MVIKKLFILIFCLFLIINEING) are cleaved as a signal peptide. A propeptide spans 23–40 (KKTKINDIKKSKPKLSST) (pro I). Residues histidine 51 and aspartate 53 each coordinate Zn(2+). N-linked (GlcNAc...) asparagine glycosylation occurs at asparagine 68. Zn(2+) contacts are provided by aspartate 173 and histidine 420. Residue aspartate 173 is the Nucleophile of the active site. 10 N-linked (GlcNAc...) asparagine glycosylation sites follow: asparagine 480, asparagine 520, asparagine 528, asparagine 539, asparagine 623, asparagine 760, asparagine 784, asparagine 828, asparagine 954, and asparagine 963. Residues 508-595 (RNEPVRIPIP…GGGKINEKVS (88 aa)) constitute a propeptide, pro II.

It belongs to the glycosyl hydrolase 38 family. As to quaternary structure, tetramer of equimolar amounts of 60 and 58 kDa subunits. The cofactor is Zn(2+). Post-translationally, first cleaved into the mature 58 kDa subunit and an intermediate 82 kDa subunit. The latter is then cleaved to its mature 60 kDa subunit form. These events occur in multiple intracellular compartments. The 60 kDa subunit may form one or more intramolecular disulfide bonds.

The protein localises to the lysosome. It carries out the reaction Hydrolysis of terminal, non-reducing alpha-D-mannose residues in alpha-D-mannosides.. This is Lysosomal alpha-mannosidase (manA) from Dictyostelium discoideum (Social amoeba).